We begin with the raw amino-acid sequence, 804 residues long: Endoplasmin (804 aa).

Residues 1–21 form the signal peptide; that stretch reads MRALWVLGLCCVLLTFGSVRA. Residues 42 to 44 carry the SRT pseudosubstrate motif motif; that stretch reads SRT. Asn62 carries N-linked (GlcNAc...) asparagine glycosylation. Ser64 is subject to Phosphoserine. An N-linked (GlcNAc...) asparagine glycan is attached at Asn107. ATP-binding residues include Asn107, Asp149, and Asn162. At Lys168 the chain carries N6-(2-hydroxyisobutyryl)lysine. Residue Ser172 is modified to Phosphoserine. ATP is bound at residue Phe199. N-linked (GlcNAc...) asparagine glycosylation occurs at Asn217. Position 288 is a phosphothreonine; by CK2 (Thr288). The segment at 288-323 is disordered; that stretch reads TVEEPMEEEEAAKEEKEDSDDEAAVEEEEEEKKPKT. Over residues 289–317 the composition is skewed to acidic residues; that stretch reads VEEPMEEEEAAKEEKEDSDDEAAVEEEEE. Ser306 carries the phosphoserine; by CK2 modification. Ser403 bears the Phosphoserine mark. Lys404 carries the post-translational modification N6-succinyllysine. The N-linked (GlcNAc...) asparagine glycan is linked to Asn445. Phosphoserine is present on Ser447. Lys479 is subject to N6-acetyllysine. Residues Asn481 and Asn502 are each glycosylated (N-linked (GlcNAc...) asparagine). Residue Lys633 is modified to N6-succinyllysine. The interval 750 to 804 is disordered; that stretch reads DPDAKVEEEPEEEPEETTEDTTEDTEQDDEEEMDAGTDDEEQETVKKSTAEKDEL. Residues 757–791 show a composition bias toward acidic residues; that stretch reads EEPEEEPEETTEDTTEDTEQDDEEEMDAGTDDEEQ. Phosphothreonine; by CK2 is present on residues Thr766, Thr770, Thr774, and Thr786. Residues 792 to 804 show a composition bias toward basic and acidic residues; it reads ETVKKSTAEKDEL. The Prevents secretion from ER signature appears at 801–804; the sequence is KDEL.

This sequence belongs to the heat shock protein 90 family. As to quaternary structure, homodimer; disulfide-linked. Component of an EIF2 complex at least composed of CELF1/CUGBP1, CALR, CALR3, EIF2S1, EIF2S2, HSP90B1 and HSPA5. Part of a large chaperone multiprotein complex comprising DNAJB11, HSP90B1, HSPA5, HYOU, PDIA2, PDIA4, PDIA6, PPIB, SDF2L1, UGGT1 and very small amounts of ERP29, but not, or at very low levels, CALR nor CANX. Interacts with AIMP1; regulates its retention in the endoplasmic reticulum. Hyperglycosylated form interacts with OS9; promoting its degradation by the endoplasmic reticulum associated degradation (ERAD). Interacts with CNPY3. This interaction is disrupted in the presence of ATP. Interacts with TLR4 and TLR9, but not with TLR3. Interacts with MZB1 in a calcium-dependent manner. Interacts with METTL23. Interacts with IL1B; the interaction facilitates cargo translocation into the ERGIC. Interacts with EIF2AK3. Post-translationally, phosphorylated by CK2. In terms of processing, N-glycosylated cotranslationally at Asn-217 by STT3A-containing OST-A complex: this glycosylation is constitutive. In response to various stress, 5 additional facultative sites (Asn-62, Asn-107, Asn-445, Asn-481 and Asn-502) can be glycosylated post-translationally by STT3B-containing OST-B complex, leading to a hyperglycosylated form that is degraded by the ER-associated degradation (ERAD) pathway. In normal conditions, the OST-A complex together with CCDC134 prevent glycosylation at facultative sites during protein folding, thereby preventing hyperglycosylation. Mechanistically, nascent HSP90B1 is tethered during translation to a specialized CCDC134-containing translocon that forms a microenvironment for its folding, in which STT3A associates with the SRT pseudosubstrate motif, and prevents access to facultative glycosylation sites until folding is completed, rendering its facultative sites inaccessible to the OST-B complex. As to expression, detected in heart muscle (at protein level).

The protein localises to the endoplasmic reticulum lumen. It localises to the sarcoplasmic reticulum lumen. It is found in the melanosome. The catalysed reaction is ATP + H2O = ADP + phosphate + H(+). Functionally, ATP-dependent chaperone involved in the processing of proteins in the endoplasmic reticulum, regulating their transport. Together with MESD, acts as a modulator of the Wnt pathway by promoting the folding of LRP6, a coreceptor of the canonical Wnt pathway. When associated with CNPY3, required for proper folding of Toll-like receptors. Promotes folding and trafficking of TLR4 to the cell surface. May participate in the unfolding of cytosolic leaderless cargos (lacking the secretion signal sequence) such as the interleukin 1/IL-1 to facilitate their translocation into the ERGIC (endoplasmic reticulum-Golgi intermediate compartment) and secretion; the translocation process is mediated by the cargo receptor TMED10. May also function in endoplasmic reticulum associated degradation (ERAD); it is however unclear whether it participates to ERAD or is a target of ERAD. This chain is Endoplasmin (HSP90B1), found in Canis lupus familiaris (Dog).